The sequence spans 149 residues: 3-dehydroquinate dehydratase (149 aa).

The active-site Proton acceptor is the Tyr23. Residues Asn74, His80, and Asp87 each coordinate substrate. The active-site Proton donor is the His100. Residues 101-102 (LS) and Arg111 contribute to the substrate site.

This sequence belongs to the type-II 3-dehydroquinase family. Homododecamer.

It catalyses the reaction 3-dehydroquinate = 3-dehydroshikimate + H2O. Its pathway is metabolic intermediate biosynthesis; chorismate biosynthesis; chorismate from D-erythrose 4-phosphate and phosphoenolpyruvate: step 3/7. In terms of biological role, catalyzes a trans-dehydration via an enolate intermediate. This is 3-dehydroquinate dehydratase from Ruegeria pomeroyi (strain ATCC 700808 / DSM 15171 / DSS-3) (Silicibacter pomeroyi).